Here is a 177-residue protein sequence, read N- to C-terminus: Large ribosomal subunit protein uL6 (177 aa).

The protein belongs to the universal ribosomal protein uL6 family. In terms of assembly, part of the 50S ribosomal subunit.

In terms of biological role, this protein binds to the 23S rRNA, and is important in its secondary structure. It is located near the subunit interface in the base of the L7/L12 stalk, and near the tRNA binding site of the peptidyltransferase center. This chain is Large ribosomal subunit protein uL6, found in Proteus mirabilis (strain HI4320).